The chain runs to 105 residues: UPF0145 protein CCNA_02462 (105 aa).

This sequence belongs to the UPF0145 family.

The sequence is that of UPF0145 protein CCNA_02462 from Caulobacter vibrioides (strain NA1000 / CB15N) (Caulobacter crescentus).